Here is a 151-residue protein sequence, read N- to C-terminus: MEVILKEDIETLGHRGDIVKVADGYGRNYLLPKKLAMEATAANKAVIEQMKASAVRRSAKEKAEAEQLVAQLDAVALVFERKVGDHDHLFGSVTSSDIAQQLEQQGFHIDRRKVQLEEPLKQTGEFLIPVKLHREVTAHVKVTVKGEETAA.

Belongs to the bacterial ribosomal protein bL9 family.

Its function is as follows. Binds to the 23S rRNA. The protein is Large ribosomal subunit protein bL9 of Acidobacterium capsulatum (strain ATCC 51196 / DSM 11244 / BCRC 80197 / JCM 7670 / NBRC 15755 / NCIMB 13165 / 161).